The chain runs to 80 residues: 14-3-3-like protein 1 (80 aa).

The protein belongs to the 14-3-3 family.

In Pseudotsuga menziesii (Douglas-fir), this protein is 14-3-3-like protein 1.